The primary structure comprises 458 residues: Biphenyl dioxygenase subunit alpha (458 aa).

A Rieske domain is found at 58-156 (WLLLGHESHV…KEGDCGFDKA (99 aa)). [2Fe-2S] cluster contacts are provided by C100, H102, C120, and H123. H233 and H239 together coordinate Fe cation.

This sequence belongs to the bacterial ring-hydroxylating dioxygenase alpha subunit family. Heterohexamer consisting of three BphA subunits and three BphE subunits. A ferredoxin (BphF) and a ferredoxin reductase (BphG) must be present to obtain activity. [2Fe-2S] cluster is required as a cofactor. Requires Fe cation as cofactor.

The catalysed reaction is biphenyl + NADH + O2 + H(+) = (2R,3S)-3-phenylcyclohexa-3,5-diene-1,2-diol + NAD(+). It participates in xenobiotic degradation; biphenyl degradation; 2-hydroxy-2,4-pentadienoate and benzoate from biphenyl: step 1/4. The sequence is that of Biphenyl dioxygenase subunit alpha (bphA) from Metapseudomonas furukawaii (Pseudomonas furukawaii).